The chain runs to 166 residues: Ribosome maturation factor RimM (166 aa).

A PRC barrel domain is found at 94–166; sequence EGEYYHADLI…IVIEAAYADQ (73 aa).

Belongs to the RimM family. As to quaternary structure, binds ribosomal protein uS19.

It localises to the cytoplasm. Its function is as follows. An accessory protein needed during the final step in the assembly of 30S ribosomal subunit, possibly for assembly of the head region. Essential for efficient processing of 16S rRNA. May be needed both before and after RbfA during the maturation of 16S rRNA. It has affinity for free ribosomal 30S subunits but not for 70S ribosomes. The polypeptide is Ribosome maturation factor RimM (Novosphingobium aromaticivorans (strain ATCC 700278 / DSM 12444 / CCUG 56034 / CIP 105152 / NBRC 16084 / F199)).